The chain runs to 200 residues: Pyridoxal 5'-phosphate synthase subunit PdxT (200 aa).

Position 52 to 54 (52 to 54) interacts with L-glutamine; the sequence is GES. C84 acts as the Nucleophile in catalysis. L-glutamine is bound by residues R116 and 145 to 146; that span reads IR. Residues H181 and E183 each act as charge relay system in the active site.

Belongs to the glutaminase PdxT/SNO family. As to quaternary structure, in the presence of PdxS, forms a dodecamer of heterodimers. Only shows activity in the heterodimer.

It catalyses the reaction aldehydo-D-ribose 5-phosphate + D-glyceraldehyde 3-phosphate + L-glutamine = pyridoxal 5'-phosphate + L-glutamate + phosphate + 3 H2O + H(+). The catalysed reaction is L-glutamine + H2O = L-glutamate + NH4(+). It functions in the pathway cofactor biosynthesis; pyridoxal 5'-phosphate biosynthesis. Functionally, catalyzes the hydrolysis of glutamine to glutamate and ammonia as part of the biosynthesis of pyridoxal 5'-phosphate. The resulting ammonia molecule is channeled to the active site of PdxS. In Saccharolobus islandicus (strain L.S.2.15 / Lassen #1) (Sulfolobus islandicus), this protein is Pyridoxal 5'-phosphate synthase subunit PdxT.